The primary structure comprises 293 residues: 4-diphosphocytidyl-2-C-methyl-D-erythritol kinase (293 aa).

Lys-10 is a catalytic residue. 96-106 is a binding site for ATP; sequence PVASGIGGGSS. Residue Asp-138 is part of the active site.

This sequence belongs to the GHMP kinase family. IspE subfamily.

The enzyme catalyses 4-CDP-2-C-methyl-D-erythritol + ATP = 4-CDP-2-C-methyl-D-erythritol 2-phosphate + ADP + H(+). It functions in the pathway isoprenoid biosynthesis; isopentenyl diphosphate biosynthesis via DXP pathway; isopentenyl diphosphate from 1-deoxy-D-xylulose 5-phosphate: step 3/6. Its function is as follows. Catalyzes the phosphorylation of the position 2 hydroxy group of 4-diphosphocytidyl-2C-methyl-D-erythritol. The polypeptide is 4-diphosphocytidyl-2-C-methyl-D-erythritol kinase (Chelativorans sp. (strain BNC1)).